Reading from the N-terminus, the 542-residue chain is CTP synthase (542 aa).

Residues 1 to 265 (MTRYVFITGG…DREILAHFQM (265 aa)) form an amidoligase domain region. Ser13 provides a ligand contact to CTP. Ser13 contacts UTP. Residues 14-19 (SLGKGL) and Asp71 contribute to the ATP site. Residues Asp71 and Glu139 each coordinate Mg(2+). Residues 146–148 (DIE), 186–191 (KTKPTQ), and Lys222 each bind CTP. UTP-binding positions include 186-191 (KTKPTQ) and Lys222. 238–240 (RDV) provides a ligand contact to ATP. Positions 291–541 (TIAIVGKYTG…IAAAIEQSRL (251 aa)) constitute a Glutamine amidotransferase type-1 domain. Residue Gly353 coordinates L-glutamine. The Nucleophile; for glutamine hydrolysis role is filled by Cys380. Residues 381–384 (FGMQ), Glu404, and Arg469 contribute to the L-glutamine site. Catalysis depends on residues His514 and Glu516.

Belongs to the CTP synthase family. Homotetramer.

It catalyses the reaction UTP + L-glutamine + ATP + H2O = CTP + L-glutamate + ADP + phosphate + 2 H(+). The catalysed reaction is L-glutamine + H2O = L-glutamate + NH4(+). The enzyme catalyses UTP + NH4(+) + ATP = CTP + ADP + phosphate + 2 H(+). It functions in the pathway pyrimidine metabolism; CTP biosynthesis via de novo pathway; CTP from UDP: step 2/2. Its activity is regulated as follows. Allosterically activated by GTP, when glutamine is the substrate; GTP has no effect on the reaction when ammonia is the substrate. The allosteric effector GTP functions by stabilizing the protein conformation that binds the tetrahedral intermediate(s) formed during glutamine hydrolysis. Inhibited by the product CTP, via allosteric rather than competitive inhibition. Its function is as follows. Catalyzes the ATP-dependent amination of UTP to CTP with either L-glutamine or ammonia as the source of nitrogen. Regulates intracellular CTP levels through interactions with the four ribonucleotide triphosphates. The chain is CTP synthase from Methylorubrum populi (strain ATCC BAA-705 / NCIMB 13946 / BJ001) (Methylobacterium populi).